We begin with the raw amino-acid sequence, 275 residues long: NH(3)-dependent NAD(+) synthetase (275 aa).

39–46 (GLSGGVDS) is a binding site for ATP. D45 contributes to the Mg(2+) binding site. Position 124 (R124) interacts with deamido-NAD(+). ATP is bound at residue T144. Mg(2+) is bound at residue E149. 2 residues coordinate deamido-NAD(+): K157 and D164. Residues K173 and S195 each coordinate ATP. A deamido-NAD(+)-binding site is contributed by 255 to 256 (HK).

It belongs to the NAD synthetase family. Homodimer.

It catalyses the reaction deamido-NAD(+) + NH4(+) + ATP = AMP + diphosphate + NAD(+) + H(+). Its pathway is cofactor biosynthesis; NAD(+) biosynthesis; NAD(+) from deamido-NAD(+) (ammonia route): step 1/1. Functionally, catalyzes the ATP-dependent amidation of deamido-NAD to form NAD. Uses ammonia as a nitrogen source. This is NH(3)-dependent NAD(+) synthetase from Staphylothermus marinus (strain ATCC 43588 / DSM 3639 / JCM 9404 / F1).